The primary structure comprises 299 residues: tRNA dimethylallyltransferase (299 aa).

11 to 18 contacts ATP; it reads GPTGSGKS. Substrate is bound at residue 13–18; the sequence is TGSGKS.

The protein belongs to the IPP transferase family. Monomer. The cofactor is Mg(2+).

It catalyses the reaction adenosine(37) in tRNA + dimethylallyl diphosphate = N(6)-dimethylallyladenosine(37) in tRNA + diphosphate. Its function is as follows. Catalyzes the transfer of a dimethylallyl group onto the adenine at position 37 in tRNAs that read codons beginning with uridine, leading to the formation of N6-(dimethylallyl)adenosine (i(6)A). The polypeptide is tRNA dimethylallyltransferase (Pseudarthrobacter chlorophenolicus (strain ATCC 700700 / DSM 12829 / CIP 107037 / JCM 12360 / KCTC 9906 / NCIMB 13794 / A6) (Arthrobacter chlorophenolicus)).